Consider the following 520-residue polypeptide: Signal peptide peptidase-like 2A (520 aa).

Residues 1–25 (MGPQRRLSPAGAALLWGFLLQLTAA) form the signal peptide. Topologically, residues 26-172 (QEAILHASGN…PSWPNFDYTM (147 aa)) are lumenal. Asparagine 58, asparagine 66, asparagine 74, asparagine 116, asparagine 126, and asparagine 149 each carry an N-linked (GlcNAc...) asparagine glycan. The PA domain maps to 63-151 (SLMNLTSTPL…YKDFRDMNQT (89 aa)). A glycan (N-linked (GlcNAc...) (complex) asparagine) is linked at asparagine 155. The helical transmembrane segment at 173–193 (VVIFVIAVFTVALGGYWSGLV) threads the bilayer. Topologically, residues 194 to 220 (ELENLKAVTTEDREMRKKKEEYLTFSP) are cytoplasmic. Residues 221-241 (LTVVIFVVICCVMMVLLYFFY) traverse the membrane as a helical segment. Topologically, residues 242 to 247 (KWLVYV) are lumenal. A helical membrane pass occupies residues 248-268 (MIAIFCIASAMSLYNCLAALI). Topologically, residues 269-285 (HKIPYGQCTIACRGKNM) are cytoplasmic. Residues 286–306 (EVRLIFLSGLCIAVAVVWAVF) traverse the membrane as a helical segment. Topologically, residues 307–311 (RNEDR) are lumenal. Residues 312–332 (WAWILQDILGIAFCLNLIKTL) form a helical membrane-spanning segment. Residues 333–340 (KLPNFKSC) are Cytoplasmic-facing. The helical transmembrane segment at 341–361 (VILLGLLLLYDVFFVFITPFI) threads the bilayer. Aspartate 351 is an active-site residue. The Lumenal portion of the chain corresponds to 362 to 399 (TKNGESIMVELAAGPFGNNEKLPVVIRVPKLIYFSVMS). A helical transmembrane segment spans residues 400–420 (VCLMPVSILGFGDIIVPGLLI). Residue aspartate 412 is part of the active site. Over 421 to 437 (AYCRRFDVQTGSSYIYY) the chain is Cytoplasmic. The helical transmembrane segment at 438 to 458 (VSSTVAYAIGMILTFVVLVLM) threads the bilayer. Over 459 to 460 (KK) the chain is Lumenal. A helical membrane pass occupies residues 461-481 (GQPALLYLVPCTLITASVVAW). The PAL motif lies at 463–465 (PAL). Residues 482 to 520 (RRKEMKKFWKGNSYQMMDHLDCATNEENPVISGEQIVQQ) lie on the Cytoplasmic side of the membrane. The YXXo lysosomal targeting motif signature appears at 495–498 (YQMM).

Belongs to the peptidase A22B family. As to quaternary structure, interacts with ITM2B. Post-translationally, glycosylated. As to expression, ubiquitous.

The protein localises to the late endosome membrane. It localises to the lysosome membrane. Its subcellular location is the membrane. In terms of biological role, intramembrane-cleaving aspartic protease (I-CLiP) that cleaves type II membrane signal peptides in the hydrophobic plane of the membrane. Functions in FASLG, ITM2B and TNF processing. Catalyzes the intramembrane cleavage of the anchored fragment of shed TNF-alpha (TNF), which promotes the release of the intracellular domain (ICD) for signaling to the nucleus. Also responsible for the intramembrane cleavage of Fas antigen ligand FASLG, which promotes the release of the intracellular FasL domain (FasL ICD). Essential for degradation of the invariant chain CD74 that plays a central role in the function of antigen-presenting cells in the immune system. Plays a role in the regulation of innate and adaptive immunity. Catalyzes the intramembrane cleavage of the simian foamy virus envelope glycoprotein gp130 independently of prior ectodomain shedding by furin or furin-like proprotein convertase (PC)-mediated cleavage proteolysis. This Homo sapiens (Human) protein is Signal peptide peptidase-like 2A.